The primary structure comprises 723 residues: Fatty acid oxidation complex subunit alpha (723 aa).

The tract at residues 1-189 (MIYQAKTLQV…KVGLLDAIVD (189 aa)) is enoyl-CoA hydratase/isomerase. Asp296 serves as a coordination point for substrate. The 3-hydroxyacyl-CoA dehydrogenase stretch occupies residues 311–723 (SQDTQHAAVL…FYSAQQASAL (413 aa)). Residues Met325, Asp344, 401 to 403 (VVE), Lys408, and Ser430 each bind NAD(+). His451 functions as the For 3-hydroxyacyl-CoA dehydrogenase activity in the catalytic mechanism. Asn454 serves as a coordination point for NAD(+). Positions 501 and 661 each coordinate substrate.

The protein in the N-terminal section; belongs to the enoyl-CoA hydratase/isomerase family. In the C-terminal section; belongs to the 3-hydroxyacyl-CoA dehydrogenase family. In terms of assembly, heterotetramer of two alpha chains (FadB) and two beta chains (FadA).

The catalysed reaction is a (3S)-3-hydroxyacyl-CoA + NAD(+) = a 3-oxoacyl-CoA + NADH + H(+). It carries out the reaction a (3S)-3-hydroxyacyl-CoA = a (2E)-enoyl-CoA + H2O. It catalyses the reaction a 4-saturated-(3S)-3-hydroxyacyl-CoA = a (3E)-enoyl-CoA + H2O. The enzyme catalyses (3S)-3-hydroxybutanoyl-CoA = (3R)-3-hydroxybutanoyl-CoA. The catalysed reaction is a (3Z)-enoyl-CoA = a 4-saturated (2E)-enoyl-CoA. It carries out the reaction a (3E)-enoyl-CoA = a 4-saturated (2E)-enoyl-CoA. The protein operates within lipid metabolism; fatty acid beta-oxidation. Functionally, involved in the aerobic and anaerobic degradation of long-chain fatty acids via beta-oxidation cycle. Catalyzes the formation of 3-oxoacyl-CoA from enoyl-CoA via L-3-hydroxyacyl-CoA. It can also use D-3-hydroxyacyl-CoA and cis-3-enoyl-CoA as substrate. The protein is Fatty acid oxidation complex subunit alpha of Vibrio cholerae serotype O1 (strain ATCC 39541 / Classical Ogawa 395 / O395).